Reading from the N-terminus, the 216-residue chain is Adenylate kinase (216 aa).

10–15 provides a ligand contact to ATP; the sequence is GAGKGT. Positions 30–59 are NMP; sequence STGDMLRAAVGVGTEVGKRAKAVMDAGKLV. AMP-binding positions include Thr-31, Arg-36, 57–59, 85–88, and Gln-92; these read KLV and GFPR. The tract at residues 126–163 is LID; that stretch reads GRYTCAQCGTVYHDTDKVPVEEGVCDKCGSTHFKRRPD. An ATP-binding site is contributed by Arg-127. The Zn(2+) site is built by Cys-130 and Cys-133. 136 to 137 provides a ligand contact to ATP; it reads VY. Positions 150 and 153 each coordinate Zn(2+). 2 residues coordinate AMP: Arg-160 and Arg-172. Ala-200 provides a ligand contact to ATP.

This sequence belongs to the adenylate kinase family. As to quaternary structure, monomer.

The protein resides in the cytoplasm. It carries out the reaction AMP + ATP = 2 ADP. Its pathway is purine metabolism; AMP biosynthesis via salvage pathway; AMP from ADP: step 1/1. Functionally, catalyzes the reversible transfer of the terminal phosphate group between ATP and AMP. Plays an important role in cellular energy homeostasis and in adenine nucleotide metabolism. The sequence is that of Adenylate kinase from Rhizobium etli (strain CIAT 652).